A 38-amino-acid polypeptide reads, in one-letter code: Kappa-actitoxin-Bcs3a (38 aa).

In terms of domain architecture, ShKT spans 2–37; sequence CIDRFPTGTCKHVKKGGSCKNSQKYRINCAKTCGLC. Cystine bridges form between Cys-2–Cys-37, Cys-11–Cys-30, and Cys-20–Cys-34. The interval 25-26 is crucial for binding to potassium channels; sequence KY.

Belongs to the sea anemone type 1 potassium channel toxin family. Type 1b subfamily.

It localises to the secreted. The protein resides in the nematocyst. In terms of biological role, inhibits voltage-gated potassium channels (IC(50)=405.0 nM for rKCNA1/Kv1.1, IC(50)=0.03 nM for rKCNA2/Kv1.2, IC(50)=1.31 nM for rKCNA6/Kv1.6, IC(50)=74.11 nM for hKCNA3/Kv1.3, and IC(50)=247.69 nM for insect Shaker IR). Binds the Shaker IR channels in a voltage-independent manner. This is Kappa-actitoxin-Bcs3a from Bunodosoma caissarum (Sea anemone).